A 428-amino-acid polypeptide reads, in one-letter code: MLDSKLLRTATEQVAKGLAKRGYELDVAKIQALEETRKAIQIKTENLQSERNTRSKAIGKAKQAGEDVAPLMQAVESIKQQLVDAEADLARVQTEWDEFVKAIPNIPADEVPEGKSDEDNVEIRRWGMPRSFHFPIKDHVDLGADLGGLDFDTATKITGSRFAVLRGGIARLHRALAQFMLDTHINQHGYEEVNIPFIVNRDSLFGTGQLPKFEEDLFKLTDDREFYLIPTAEVPLTNIYRDAILEDNQLPIKFVAHSPCFRSEAGSYGRDTRGMIRQHQFEKVELVWLVQPEKSDEALEALVAHAEKILHDLELPHRTVVLCGGDIGFSAAKTYDIEVWVPSQNKYREISSCSNVRDFQARRMLARFRNKETGKPELLHTLNGSGLAVGRTLLAVLENYQQEDGSVIIPEVLRPYMGGQEVLAPVKQ.

Residue 231 to 233 (TAE) participates in L-serine binding. 262–264 (RSE) lines the ATP pocket. Glu285 contributes to the L-serine binding site. 349–352 (EISS) is an ATP binding site. Ser385 serves as a coordination point for L-serine.

Belongs to the class-II aminoacyl-tRNA synthetase family. Type-1 seryl-tRNA synthetase subfamily. In terms of assembly, homodimer. The tRNA molecule binds across the dimer.

The protein localises to the cytoplasm. It catalyses the reaction tRNA(Ser) + L-serine + ATP = L-seryl-tRNA(Ser) + AMP + diphosphate + H(+). It carries out the reaction tRNA(Sec) + L-serine + ATP = L-seryl-tRNA(Sec) + AMP + diphosphate + H(+). Its pathway is aminoacyl-tRNA biosynthesis; selenocysteinyl-tRNA(Sec) biosynthesis; L-seryl-tRNA(Sec) from L-serine and tRNA(Sec): step 1/1. Its function is as follows. Catalyzes the attachment of serine to tRNA(Ser). Is also able to aminoacylate tRNA(Sec) with serine, to form the misacylated tRNA L-seryl-tRNA(Sec), which will be further converted into selenocysteinyl-tRNA(Sec). This is Serine--tRNA ligase from Cellvibrio japonicus (strain Ueda107) (Pseudomonas fluorescens subsp. cellulosa).